Here is a 167-residue protein sequence, read N- to C-terminus: Large ribosomal subunit protein uL10 (167 aa).

The protein belongs to the universal ribosomal protein uL10 family. In terms of assembly, part of the ribosomal stalk of the 50S ribosomal subunit. The N-terminus interacts with L11 and the large rRNA to form the base of the stalk. The C-terminus forms an elongated spine to which L12 dimers bind in a sequential fashion forming a multimeric L10(L12)X complex.

In terms of biological role, forms part of the ribosomal stalk, playing a central role in the interaction of the ribosome with GTP-bound translation factors. The protein is Large ribosomal subunit protein uL10 of Streptococcus thermophilus (strain CNRZ 1066).